Consider the following 436-residue polypeptide: Trigger factor (436 aa).

A PPIase FKBP-type domain is found at 161–246; the sequence is GDQVIVDFDG…VREVKEPTLP (86 aa).

It belongs to the FKBP-type PPIase family. Tig subfamily.

It localises to the cytoplasm. It catalyses the reaction [protein]-peptidylproline (omega=180) = [protein]-peptidylproline (omega=0). Functionally, involved in protein export. Acts as a chaperone by maintaining the newly synthesized protein in an open conformation. Functions as a peptidyl-prolyl cis-trans isomerase. This is Trigger factor from Thioalkalivibrio sulfidiphilus (strain HL-EbGR7).